Here is a 388-residue protein sequence, read N- to C-terminus: Chorismate synthase (388 aa).

NADP(+) contacts are provided by R39 and R45. Residues 130 to 132, 251 to 252, G296, 311 to 315, and R337 contribute to the FMN site; these read RSS, NA, and KPIPT.

Belongs to the chorismate synthase family. In terms of assembly, homotetramer. Requires FMNH2 as cofactor.

It catalyses the reaction 5-O-(1-carboxyvinyl)-3-phosphoshikimate = chorismate + phosphate. The protein operates within metabolic intermediate biosynthesis; chorismate biosynthesis; chorismate from D-erythrose 4-phosphate and phosphoenolpyruvate: step 7/7. In terms of biological role, catalyzes the anti-1,4-elimination of the C-3 phosphate and the C-6 proR hydrogen from 5-enolpyruvylshikimate-3-phosphate (EPSP) to yield chorismate, which is the branch point compound that serves as the starting substrate for the three terminal pathways of aromatic amino acid biosynthesis. This reaction introduces a second double bond into the aromatic ring system. The protein is Chorismate synthase of Streptococcus pneumoniae serotype 19F (strain G54).